A 448-amino-acid polypeptide reads, in one-letter code: Glutamyl-tRNA reductase 2 (448 aa).

Substrate-binding positions include 50-53, Ser109, 114-116, and Gln120; these read TCER and ESD. Catalysis depends on Cys51, which acts as the Nucleophile. An NADP(+)-binding site is contributed by 190–195; sequence GTGQVA. Positions 423–448 are disordered; sequence DQAVPAYSPQPIGNTSNAAASATPRR. A compositionally biased stretch (polar residues) spans 433 to 442; sequence PIGNTSNAAA.

Belongs to the glutamyl-tRNA reductase family. As to quaternary structure, homodimer.

It carries out the reaction (S)-4-amino-5-oxopentanoate + tRNA(Glu) + NADP(+) = L-glutamyl-tRNA(Glu) + NADPH + H(+). It functions in the pathway porphyrin-containing compound metabolism; protoporphyrin-IX biosynthesis; 5-aminolevulinate from L-glutamyl-tRNA(Glu): step 1/2. In terms of biological role, catalyzes the NADPH-dependent reduction of glutamyl-tRNA(Glu) to glutamate 1-semialdehyde (GSA). The chain is Glutamyl-tRNA reductase 2 from Nocardioides sp. (strain ATCC BAA-499 / JS614).